The sequence spans 57 residues: Potassium channel toxin alpha-KTx 23.3 (57 aa).

The first 23 residues, 1–23, serve as a signal peptide directing secretion; sequence MKMSIVIILLLFTCLIATNGASG. Intrachain disulfides connect cysteine 26/cysteine 46, cysteine 32/cysteine 51, cysteine 36/cysteine 53, and cysteine 41/cysteine 56.

The protein belongs to the short scorpion toxin superfamily. Potassium channel inhibitor family. Alpha-KTx 23 subfamily. In terms of tissue distribution, expressed by the venom gland.

The protein localises to the secreted. Its function is as follows. This toxin shows both immunosuppressive and anti-inflammatory activities. It has the potential to inhibit human T cell activation, since it reduces IL-2 secretion and the expression of T cell activation marker CD69 and acts as an anti-inflammatory agent, since it provokes the reduction of secretion of both IFN-gamma and TNF-alpha. In vivo, the delayed-type hypersensitivity response in rat autoimmune disease model is ameliorated in the presence of this toxin. Acts by blocking Kv1.3/KCNA3 potassium channels of T-lymphocytes. This chain is Potassium channel toxin alpha-KTx 23.3, found in Scorpiops tibetanus (Scorpion).